The chain runs to 303 residues: N-acetyl-D-glucosamine kinase (303 aa).

Residues 4 to 11 and 133 to 140 each bind ATP; these read GFDIGGTK and GVGGGLVL. Histidine 157, cysteine 177, cysteine 179, and cysteine 184 together coordinate Zn(2+).

The protein belongs to the ROK (NagC/XylR) family. NagK subfamily.

It catalyses the reaction N-acetyl-D-glucosamine + ATP = N-acetyl-D-glucosamine 6-phosphate + ADP + H(+). It participates in cell wall biogenesis; peptidoglycan recycling. Catalyzes the phosphorylation of N-acetyl-D-glucosamine (GlcNAc) derived from cell-wall degradation, yielding GlcNAc-6-P. The sequence is that of N-acetyl-D-glucosamine kinase from Salmonella choleraesuis (strain SC-B67).